The following is a 2109-amino-acid chain: General transcription factor 3C polypeptide 1 (2109 aa).

The interval 467–521 (LPEGEDTFLSESDSEEERSSSKRRGRGSQKDTRASANLRPKTQPHHSTPTKGGWK) is disordered. The span at 469-482 (EGEDTFLSESDSEE) shows a compositional bias: acidic residues. A Glycyl lysine isopeptide (Lys-Gly) (interchain with G-Cter in SUMO2) cross-link involves residue K529. Residues 586 to 609 (MENPKESSSSLKTGRHSSGQDKPH) are disordered. S667 carries the phosphoserine modification. Over residues 718-727 (STANRVKTSQ) the composition is skewed to polar residues. Residues 718-775 (STANRVKTSQPPVPQGEAEEDSQGKEGPSGSGDSQLSASSRSESGRMKKSDNKMGITP) form a disordered region. S739 carries the post-translational modification Phosphoserine. Over residues 748-759 (SGDSQLSASSRS) the composition is skewed to low complexity. The span at 760 to 769 (ESGRMKKSDN) shows a compositional bias: basic and acidic residues. Residues K770 and K833 each participate in a glycyl lysine isopeptide (Lys-Gly) (interchain with G-Cter in SUMO2) cross-link. Disordered stretches follow at residues 836–857 (SGRAGVRPSSSGSAWEACSEAP) and 1059–1082 (RKNSSTDQGSDEEGSLQKEQESAM). Residues S1062 and S1068 each carry the phosphoserine modification. The span at 1073-1082 (SLQKEQESAM) shows a compositional bias: basic and acidic residues. K1142 participates in a covalent cross-link: Glycyl lysine isopeptide (Lys-Gly) (interchain with G-Cter in SUMO2). The segment at 1202–1241 (SLDRNRRVRGGKSQKRKRLKKDPGKKIKRKKKGEFPGEKS) is disordered. The segment covering 1207-1221 (RRVRGGKSQKRKRLK) has biased composition (basic residues). S1253 and S1611 each carry phosphoserine. A disordered region spans residues 1608-1631 (KDGSLEDDEDEEDDLDEGVGGKRR). Over residues 1612 to 1624 (LEDDEDEEDDLDE) the composition is skewed to acidic residues. A phosphoserine mark is found at S1632 and S1653. Positions 1823–1833 (EDADIQREDPQ) are enriched in basic and acidic residues. Residues 1823–1961 (EDADIQREDP…GSEDPRGFTE (139 aa)) are disordered. Low complexity predominate over residues 1838-1848 (EGSSSEDSPPE). Residues S1856, S1865, S1868, S1896, and S1911 each carry the phosphoserine modification. A compositionally biased stretch (low complexity) spans 1916–1926 (LEDTAAAGAAQ). Positions 1937–1947 (SPGQEQLSGQA) are enriched in polar residues. Position 1969 is a phosphoserine (S1969).

The protein belongs to the TFIIIC subunit 1 family. Part of the TFIIIC subcomplex TFIIIC2, consisting of six subunits, GTF3C1, GTF3C2, GTF3C3, GTF3C4, GTF3C5 and GTF3C6. Interacts with IGHMBP2. Interacts with MAF1.

It localises to the nucleus. In terms of biological role, required for RNA polymerase III-mediated transcription. Component of TFIIIC that initiates transcription complex assembly on tRNA and is required for transcription of 5S rRNA and other stable nuclear and cytoplasmic RNAs. Binds to the box B promoter element. The protein is General transcription factor 3C polypeptide 1 (GTF3C1) of Homo sapiens (Human).